Reading from the N-terminus, the 425-residue chain is Serine--tRNA ligase (425 aa).

Residue 231 to 233 participates in L-serine binding; sequence TAE. ATP contacts are provided by residues 262-264 and V278; that span reads RTE. Residue E285 coordinates L-serine. Position 349-352 (349-352) interacts with ATP; that stretch reads EVTS. T384 contacts L-serine.

Belongs to the class-II aminoacyl-tRNA synthetase family. Type-1 seryl-tRNA synthetase subfamily. In terms of assembly, homodimer. The tRNA molecule binds across the dimer.

It is found in the cytoplasm. The catalysed reaction is tRNA(Ser) + L-serine + ATP = L-seryl-tRNA(Ser) + AMP + diphosphate + H(+). It catalyses the reaction tRNA(Sec) + L-serine + ATP = L-seryl-tRNA(Sec) + AMP + diphosphate + H(+). The protein operates within aminoacyl-tRNA biosynthesis; selenocysteinyl-tRNA(Sec) biosynthesis; L-seryl-tRNA(Sec) from L-serine and tRNA(Sec): step 1/1. Its function is as follows. Catalyzes the attachment of serine to tRNA(Ser). Is also able to aminoacylate tRNA(Sec) with serine, to form the misacylated tRNA L-seryl-tRNA(Sec), which will be further converted into selenocysteinyl-tRNA(Sec). The polypeptide is Serine--tRNA ligase (Dictyoglomus turgidum (strain DSM 6724 / Z-1310)).